We begin with the raw amino-acid sequence, 347 residues long: Dihydroorotate dehydrogenase (quinone) (347 aa).

FMN is bound by residues 65 to 69 and Thr-89; that span reads AGLDK. Lys-69 serves as a coordination point for substrate. Substrate is bound at residue 114–118; the sequence is NRMGF. FMN contacts are provided by Asn-146 and Asn-179. Asn-179 lines the substrate pocket. Ser-182 (nucleophile) is an active-site residue. Position 184 (Asn-184) interacts with substrate. FMN-binding residues include Lys-224 and Thr-252. 253 to 254 is a substrate binding site; that stretch reads NT. Residues Gly-275, Gly-304, and 325–326 each bind FMN; that span reads YT.

It belongs to the dihydroorotate dehydrogenase family. Type 2 subfamily. Monomer. The cofactor is FMN.

It localises to the cell membrane. It carries out the reaction (S)-dihydroorotate + a quinone = orotate + a quinol. It participates in pyrimidine metabolism; UMP biosynthesis via de novo pathway; orotate from (S)-dihydroorotate (quinone route): step 1/1. Its function is as follows. Catalyzes the conversion of dihydroorotate to orotate with quinone as electron acceptor. The polypeptide is Dihydroorotate dehydrogenase (quinone) (Herminiimonas arsenicoxydans).